A 305-amino-acid polypeptide reads, in one-letter code: ATP synthase F(0) complex subunit B2, mitochondrial (305 aa).

A mitochondrion-targeting transit peptide spans 1–22 (MSLSRCLPLGQNARVIIIPARL).

Belongs to the eukaryotic ATPase B chain family. As to quaternary structure, subunit of the F-type ATPase which has 2 components, CF(1) - the catalytic core - and CF(0) - the membrane proton channel.

The protein localises to the mitochondrion. The protein resides in the mitochondrion inner membrane. Mitochondrial membrane ATP synthase (F(1)F(0) ATP synthase or Complex V) produces ATP from ADP in the presence of a proton gradient across the membrane which is generated by electron transport complexes of the respiratory chain. F-type ATPases consist of two structural domains, F(1) - containing the extramembraneous catalytic core, and F(0) - containing the membrane proton channel, linked together by a central stalk and a peripheral stalk. During catalysis, ATP synthesis in the catalytic domain of F(1) is coupled via a rotary mechanism of the central stalk subunits to proton translocation. Part of the complex F(0) domain and the peripheric stalk, which acts as a stator to hold the subunits of the catalytic subcomplexes relative to the rotary elements. Plays a role in somatic development. Does not play a role in germline development. In Caenorhabditis elegans, this protein is ATP synthase F(0) complex subunit B2, mitochondrial.